The chain runs to 273 residues: MAINLYKTSIPSTRKGAVDSQVKSNPRNNLIYGQHRCGKGRNARGIITAGHRGGGHKRLYRKIDFRRNDKDISGRIVTIEYDPNRNAYICLIHYGDGEKRYILHPRGAIIGDTIVSGTEVPISMGNALPLTDMPLGTAIHNIEITLEKGGQLARAAGAVSKLIAKEGKSATLRLPSGEVRLISKNCSATVGQVGNVEVNQKSLGRAGSKCWLGKRPVVRGVVMNPVDHPHGGGEGRAPIGRKKPATPWGYPALGRRSRKRNKYSDRFILRRRK.

Positions 224–273 (NPVDHPHGGGEGRAPIGRKKPATPWGYPALGRRSRKRNKYSDRFILRRRK) are disordered. The span at 262-273 (KYSDRFILRRRK) shows a compositional bias: basic and acidic residues.

This sequence belongs to the universal ribosomal protein uL2 family. In terms of assembly, part of the 50S ribosomal subunit.

It localises to the plastid. It is found in the chloroplast. This Piper cenocladum (Ant piper) protein is Large ribosomal subunit protein uL2cz/uL2cy (rpl2-A).